The following is a 499-amino-acid chain: E3 ubiquitin-protein ligase TRIM69 (499 aa).

The segment at methionine 1 to glutamine 152 is necessary for nuclear localization. The segment at cysteine 41–lysine 82 adopts an RING-type zinc-finger fold. Positions phenylalanine 160 to asparagine 265 form a coiled coil. Residues proline 305 to glutamine 499 form the B30.2/SPRY domain. Residue serine 341 is modified to Phosphoserine.

Belongs to the TRIM/RBCC family. Homo-multimer; required for antiviral activity. Interacts with PML. Phosphorylated. Phosphorylation is necessary for nuclear localization.

The protein resides in the cytoplasm. It localises to the nucleus. Its subcellular location is the nucleus speckle. It is found in the cytoskeleton. The protein localises to the microtubule organizing center. The protein resides in the centrosome. It catalyses the reaction S-ubiquitinyl-[E2 ubiquitin-conjugating enzyme]-L-cysteine + [acceptor protein]-L-lysine = [E2 ubiquitin-conjugating enzyme]-L-cysteine + N(6)-ubiquitinyl-[acceptor protein]-L-lysine.. Its pathway is protein modification; protein ubiquitination. In terms of biological role, E3 ubiquitin ligase that plays an important role in antiviral immunity by restricting different viral infections including dengue virus or vesicular stomatitis indiana virus. Ubiquitinates viral proteins such as dengue virus NS3 thereby limiting infection. In addition, acts as a key mediator of type I interferon induced microtubule stabilization by directly associating to microtubules independently of its E3 ligase activity. Also plays a role in cataract formation together with TP53. Mechanistically, inhibits UVB-induced cell apoptosis and reactive oxygen species (ROS) production by inducing TP53 ubiquitination. Regulates centrosome dynamics and mitotic progression by ubiquitinating STK3/MST2; leading to its redistribution to the perinuclear cytoskeleton and subsequent phosphorylation by PLK1. The sequence is that of E3 ubiquitin-protein ligase TRIM69 (Trim69) from Rattus norvegicus (Rat).